Reading from the N-terminus, the 449-residue chain is Exodeoxyribonuclease 7 large subunit (449 aa).

It belongs to the XseA family. In terms of assembly, heterooligomer composed of large and small subunits.

It is found in the cytoplasm. It carries out the reaction Exonucleolytic cleavage in either 5'- to 3'- or 3'- to 5'-direction to yield nucleoside 5'-phosphates.. In terms of biological role, bidirectionally degrades single-stranded DNA into large acid-insoluble oligonucleotides, which are then degraded further into small acid-soluble oligonucleotides. The protein is Exodeoxyribonuclease 7 large subunit of Aliivibrio fischeri (strain ATCC 700601 / ES114) (Vibrio fischeri).